Consider the following 331-residue polypeptide: Glycerol-3-phosphate dehydrogenase [NAD(P)+] (331 aa).

NADPH contacts are provided by Trp11 and Lys101. Residues Lys101, Gly132, and Ser134 each contribute to the sn-glycerol 3-phosphate site. Ala136 is a binding site for NADPH. Residues Lys188, Asp241, Ser251, Arg252, and Asn253 each coordinate sn-glycerol 3-phosphate. The Proton acceptor role is filled by Lys188. NADPH is bound at residue Arg252. Glu278 is an NADPH binding site.

This sequence belongs to the NAD-dependent glycerol-3-phosphate dehydrogenase family.

The protein localises to the cytoplasm. It catalyses the reaction sn-glycerol 3-phosphate + NAD(+) = dihydroxyacetone phosphate + NADH + H(+). The catalysed reaction is sn-glycerol 3-phosphate + NADP(+) = dihydroxyacetone phosphate + NADPH + H(+). It participates in membrane lipid metabolism; glycerophospholipid metabolism. Its function is as follows. Catalyzes the reduction of the glycolytic intermediate dihydroxyacetone phosphate (DHAP) to sn-glycerol 3-phosphate (G3P), the key precursor for phospholipid synthesis. This is Glycerol-3-phosphate dehydrogenase [NAD(P)+] from Phytoplasma mali (strain AT).